The following is a 219-amino-acid chain: Probable transaldolase (219 aa).

K83 serves as the catalytic Schiff-base intermediate with substrate.

It belongs to the transaldolase family. Type 3B subfamily.

The protein resides in the cytoplasm. The enzyme catalyses D-sedoheptulose 7-phosphate + D-glyceraldehyde 3-phosphate = D-erythrose 4-phosphate + beta-D-fructose 6-phosphate. It functions in the pathway carbohydrate degradation; pentose phosphate pathway; D-glyceraldehyde 3-phosphate and beta-D-fructose 6-phosphate from D-ribose 5-phosphate and D-xylulose 5-phosphate (non-oxidative stage): step 2/3. Its function is as follows. Transaldolase is important for the balance of metabolites in the pentose-phosphate pathway. The sequence is that of Probable transaldolase from Cereibacter sphaeroides (strain ATCC 17029 / ATH 2.4.9) (Rhodobacter sphaeroides).